The chain runs to 502 residues: MNRFIDRVVLHLAAGDGGNGCVSVHREKFKPLGGPDGGNGGHGGDIILEVSPQVHTLLDFHYHPHVKAPRGANGAGDNRSGARGEDLILEVPAGTVVLNSKGETLADLTTVGMKFIAAAGGQGGLGNAALASRARKAPGFALNGEPGEQHDLILELKSMADVGLVGFPSAGKSSLISVMSAAKPKIGDYPFTTLQPNLGVVEVGHQTFIMADVPGLIPGASEGKGLGLDFLRHIERTSVLVHVVDTASMDPGRDPISDIEALEAELAAYQSALDEDTGLGDLDKRPRVVVLNKADVPEALELAEFLKGDIEQQFGWPVFIVSAVAQRGLDPLKYKLLEIVQQARKKRPKEKLAESVIIKPKPVDGRRRREEFEIRKDPDNPGGFLVVGEKPERWILQTDFENDEAVGYLADRLAKLGVEDKLRKAGAQTGSEVTIGGVTFEWEPMTSAVDTAASPRGTDIRLEKNERISAAERKRASQVRRGLIDEFDYGDGEEASRERWEG.

The Obg domain occupies 2-159 (NRFIDRVVLH…HDLILELKSM (158 aa)). Residues 160–341 (ADVGLVGFPS…LKYKLLEIVQ (182 aa)) form the OBG-type G domain. GTP is bound by residues 166–173 (GFPSAGKS), 191–195 (FTTLQ), 212–215 (DVPG), 292–295 (NKAD), and 322–324 (SAV). Positions 173 and 193 each coordinate Mg(2+). One can recognise an OCT domain in the interval 364 to 444 (DGRRRREEFE…IGGVTFEWEP (81 aa)).

This sequence belongs to the TRAFAC class OBG-HflX-like GTPase superfamily. OBG GTPase family. As to quaternary structure, monomer. Mg(2+) serves as cofactor.

The protein resides in the cytoplasm. An essential GTPase which binds GTP, GDP and possibly (p)ppGpp with moderate affinity, with high nucleotide exchange rates and a fairly low GTP hydrolysis rate. Plays a role in control of the cell cycle, stress response, ribosome biogenesis and in those bacteria that undergo differentiation, in morphogenesis control. This is GTPase Obg from Corynebacterium efficiens (strain DSM 44549 / YS-314 / AJ 12310 / JCM 11189 / NBRC 100395).